Consider the following 130-residue polypeptide: Large ribosomal subunit protein uL14 (130 aa).

The protein belongs to the universal ribosomal protein uL14 family. As to quaternary structure, part of the 50S ribosomal subunit. Forms a cluster with proteins L3 and L19. In the 70S ribosome, L14 and L19 interact and together make contacts with the 16S rRNA in bridges B5 and B8.

Functionally, binds to 23S rRNA. Forms part of two intersubunit bridges in the 70S ribosome. The sequence is that of Large ribosomal subunit protein uL14 from Leptospira biflexa serovar Patoc (strain Patoc 1 / Ames).